Consider the following 197-residue polypeptide: Dephospho-CoA kinase (197 aa).

The DPCK domain maps to 3 to 197; sequence VYGLTGGIGS…QSLLHTHQNT (195 aa). Residue 11–16 coordinates ATP; it reads GSGKTT.

The protein belongs to the CoaE family.

The protein localises to the cytoplasm. It catalyses the reaction 3'-dephospho-CoA + ATP = ADP + CoA + H(+). Its pathway is cofactor biosynthesis; coenzyme A biosynthesis; CoA from (R)-pantothenate: step 5/5. Catalyzes the phosphorylation of the 3'-hydroxyl group of dephosphocoenzyme A to form coenzyme A. The protein is Dephospho-CoA kinase of Hydrogenovibrio crunogenus (strain DSM 25203 / XCL-2) (Thiomicrospira crunogena).